Here is an 89-residue protein sequence, read N- to C-terminus: Gallinacin-13 (89 aa).

The N-terminal stretch at 1–23 is a signal peptide; sequence MRILQLLFAIVVILLLQDAPARG. 3 disulfides stabilise this stretch: Cys30/Cys58, Cys37/Cys51, and Cys41/Cys59. The tract at residues 66 to 89 is disordered; the sequence is PFSNPKHSVLHTAEQDPSPSLGGT.

Belongs to the beta-defensin family. In terms of tissue distribution, expressed in the liver, gall bladder, kidney, small intestine, spleen, testis, ovary and male and female reproductive tracts. Not detected in the ovarian stroma and the theca and granulosa layers of the ovarian follicle.

It is found in the secreted. The protein localises to the cytoplasmic granule. In terms of biological role, has bactericidal activity. Potent activity against E.coli, L.monocytogenes, S.typhimurium and S.pyogenes but mot against S.aureus. Has bactericidal activity. In Gallus gallus (Chicken), this protein is Gallinacin-13 (GAL13).